A 929-amino-acid polypeptide reads, in one-letter code: Protein translocase subunit SecA (929 aa).

ATP contacts are provided by residues Gln83, 101–105, and Asp491; that span reads GEGKT.

Belongs to the SecA family. Monomer and homodimer. Part of the essential Sec protein translocation apparatus which comprises SecA, SecYEG and auxiliary proteins SecDF. Other proteins may also be involved.

The protein resides in the cell inner membrane. It is found in the cellular thylakoid membrane. Its subcellular location is the cytoplasm. The enzyme catalyses ATP + H2O + cellular proteinSide 1 = ADP + phosphate + cellular proteinSide 2.. Functionally, part of the Sec protein translocase complex. Interacts with the SecYEG preprotein conducting channel. Has a central role in coupling the hydrolysis of ATP to the transfer of proteins into and across the cell membrane, serving as an ATP-driven molecular motor driving the stepwise translocation of polypeptide chains across the membrane. Its function is as follows. Probably participates in protein translocation into and across both the cytoplasmic and thylakoid membranes in cyanobacterial cells. The polypeptide is Protein translocase subunit SecA (Thermosynechococcus vestitus (strain NIES-2133 / IAM M-273 / BP-1)).